Here is a 218-residue protein sequence, read N- to C-terminus: rRNA methyltransferase 2, mitochondrial (218 aa).

S-adenosyl-L-methionine is bound by residues 59 to 62 (PGSW), Asp80, 96 to 97 (DI), and Asp133. The Proton acceptor role is filled by Lys173.

This sequence belongs to the class I-like SAM-binding methyltransferase superfamily. RNA methyltransferase RlmE family.

It is found in the mitochondrion. The catalysed reaction is a uridine in 21S rRNA + S-adenosyl-L-methionine = a 2'-O-methyluridine in 21S rRNA + S-adenosyl-L-homocysteine + H(+). S-adenosyl-L-methionine-dependent 2'-O-ribose methyltransferase that catalyzes the formation of the 2'-O-methyluridine corresponding to position 2791 in S.cerevisiae 21S mitochondrial large subunit ribosomal RNA (mtLSU rRNA), a universally conserved modification in the peptidyl transferase domain of the mtLSU rRNA. In Schizosaccharomyces pombe (strain 972 / ATCC 24843) (Fission yeast), this protein is rRNA methyltransferase 2, mitochondrial.